A 362-amino-acid chain; its full sequence is Dihydroorotate dehydrogenase (quinone) (362 aa).

FMN contacts are provided by residues 62–66 (AGYDK) and threonine 86. A substrate-binding site is contributed by lysine 66. 111 to 115 (NRLGF) serves as a coordination point for substrate. FMN contacts are provided by asparagine 139 and asparagine 170. Asparagine 170 contributes to the substrate binding site. Catalysis depends on serine 173, which acts as the Nucleophile. Asparagine 175 is a binding site for substrate. Residues lysine 215 and serine 243 each contribute to the FMN site. 244 to 245 (NT) is a binding site for substrate. FMN-binding positions include glycine 266, glycine 295, and 316–317 (YS).

Belongs to the dihydroorotate dehydrogenase family. Type 2 subfamily. As to quaternary structure, monomer. FMN serves as cofactor.

Its subcellular location is the cell membrane. It catalyses the reaction (S)-dihydroorotate + a quinone = orotate + a quinol. Its pathway is pyrimidine metabolism; UMP biosynthesis via de novo pathway; orotate from (S)-dihydroorotate (quinone route): step 1/1. Its function is as follows. Catalyzes the conversion of dihydroorotate to orotate with quinone as electron acceptor. In Rhizobium rhizogenes (strain K84 / ATCC BAA-868) (Agrobacterium radiobacter), this protein is Dihydroorotate dehydrogenase (quinone).